Here is a 438-residue protein sequence, read N- to C-terminus: Glycerol-3-phosphate acyltransferase 3 (438 aa).

Residues 14–34 form a helical membrane-spanning segment; it reads WLTLVGGLILLPSAFGLSLGI. Phosphoserine occurs at positions 68 and 77. 2 consecutive transmembrane segments (helical) span residues 137-157 and 161-181; these read ISPR…CFLL and VTLA…VGQL. The HXXXXD motif motif lies at 229 to 234; sequence HTSPID.

It belongs to the 1-acyl-sn-glycerol-3-phosphate acyltransferase family. Most abundant in epididymal fat, followed by small intestine, brown adipose tissue, kidney, heart and colon.

The protein resides in the endoplasmic reticulum membrane. It carries out the reaction sn-glycerol 3-phosphate + an acyl-CoA = a 1-acyl-sn-glycero-3-phosphate + CoA. It catalyses the reaction a 1-acyl-sn-glycero-3-phosphate + an acyl-CoA = a 1,2-diacyl-sn-glycero-3-phosphate + CoA. The enzyme catalyses dodecanoyl-CoA + sn-glycerol 3-phosphate = 1-dodecanoyl-sn-glycerol 3-phosphate + CoA. The catalysed reaction is sn-glycerol 3-phosphate + hexadecanoyl-CoA = 1-hexadecanoyl-sn-glycero-3-phosphate + CoA. It carries out the reaction sn-glycerol 3-phosphate + (9Z)-octadecenoyl-CoA = 1-(9Z-octadecenoyl)-sn-glycero-3-phosphate + CoA. It catalyses the reaction (9Z,12Z)-octadecadienoyl-CoA + sn-glycerol 3-phosphate = 1-(9Z,12Z)-octadecadienoyl-sn-glycero-3-phosphate + CoA. The enzyme catalyses 1-tetradecanoyl-sn-glycerol 3-phosphate + (9Z)-octadecenoyl-CoA = 1-tetradecanoyl-2-(9Z)-octadecenoyl-sn-glycero-3-phosphate + CoA. The catalysed reaction is 1-hexadecanoyl-sn-glycero-3-phosphate + (9Z)-octadecenoyl-CoA = 1-hexadecanoyl-2-(9Z-octadecenoyl)-sn-glycero-3-phosphate + CoA. It carries out the reaction 1-(9Z-octadecenoyl)-sn-glycero-3-phosphate + (9Z)-octadecenoyl-CoA = 1,2-di-(9Z-octadecenoyl)-sn-glycero-3-phosphate + CoA. It catalyses the reaction 1-(6Z,9Z,12Z-octadecatrienoyl)-sn-glycero-3-phosphate + (9Z)-octadecenoyl-CoA = (6Z,9Z,12Z)-octadecatrienoyl-2-(9Z)-octadecenoyl-sn-glycero-3-phosphate + CoA. The enzyme catalyses 1-(9Z,12Z,15Z)-octadecatrienoyl-sn-glycero-3-phosphate + (9Z)-octadecenoyl-CoA = 1-(9Z,12Z,15Z)-octadecatrienoyl-2-(9Z)-octadecenoyl-sn-glycero-3-phosphate + CoA. The catalysed reaction is 1-(9Z-octadecenoyl)-sn-glycero-3-phosphate + tetradecanoyl-CoA = 1-(9Z)-octadecenoyl-2-tetradecanoyl-sn-glycero-3-phosphate + CoA. It carries out the reaction 1-(9Z-octadecenoyl)-sn-glycero-3-phosphate + hexadecanoyl-CoA = 1-(9Z)-octadecenoyl-2-hexadecanoyl-sn-glycero-3-phosphate + CoA. It catalyses the reaction 1-(9Z-octadecenoyl)-sn-glycero-3-phosphate + octadecanoyl-CoA = 1-(9Z-octadecenoyl)-2-octadecanoyl-sn-glycero-3-phosphate + CoA. The enzyme catalyses 1-(9Z-octadecenoyl)-sn-glycero-3-phosphate + (9Z,12Z)-octadecadienoyl-CoA = 1-(9Z)-octadecenoyl-2-(9Z,12Z)-octadecadienoyl-sn-glycero-3-phosphate + CoA. The catalysed reaction is 1-(5Z,8Z,11Z,14Z-eicosatetraenoyl)-sn-glycero-3-phosphate + (9Z)-octadecenoyl-CoA = 1-(5Z,8Z,11Z,14Z)-eicosatetraenoyl-2-(9Z)-octadecenoyl-sn-glycero-3-phosphate + CoA. Its pathway is glycerolipid metabolism; triacylglycerol biosynthesis. It participates in phospholipid metabolism; CDP-diacylglycerol biosynthesis; CDP-diacylglycerol from sn-glycerol 3-phosphate: step 1/3. Converts glycerol-3-phosphate to 1-acyl-sn-glycerol-3-phosphate (lysophosphatidic acid or LPA) by incorporating an acyl moiety at the sn-1 position of the glycerol backbone. Also converts LPA into 1,2-diacyl-sn-glycerol-3-phosphate (phosphatidic acid or PA) by incorporating an acyl moiety at the sn-2 position of the glycerol backbone. Protects cells against lipotoxicity. In Mus musculus (Mouse), this protein is Glycerol-3-phosphate acyltransferase 3.